A 336-amino-acid chain; its full sequence is Aspartate carbamoyltransferase catalytic subunit (336 aa).

Carbamoyl phosphate-binding residues include arginine 72 and threonine 73. Position 100 (lysine 100) interacts with L-aspartate. Residues arginine 122, histidine 155, and glutamine 158 each coordinate carbamoyl phosphate. Arginine 188 and arginine 242 together coordinate L-aspartate. Glycine 288 and proline 289 together coordinate carbamoyl phosphate.

It belongs to the aspartate/ornithine carbamoyltransferase superfamily. ATCase family. As to quaternary structure, heterododecamer (2C3:3R2) of six catalytic PyrB chains organized as two trimers (C3), and six regulatory PyrI chains organized as three dimers (R2).

The enzyme catalyses carbamoyl phosphate + L-aspartate = N-carbamoyl-L-aspartate + phosphate + H(+). It functions in the pathway pyrimidine metabolism; UMP biosynthesis via de novo pathway; (S)-dihydroorotate from bicarbonate: step 2/3. In terms of biological role, catalyzes the condensation of carbamoyl phosphate and aspartate to form carbamoyl aspartate and inorganic phosphate, the committed step in the de novo pyrimidine nucleotide biosynthesis pathway. This Lactobacillus leichmannii protein is Aspartate carbamoyltransferase catalytic subunit.